Reading from the N-terminus, the 138-residue chain is Transcription antitermination protein NusB (138 aa).

This sequence belongs to the NusB family.

Involved in transcription antitermination. Required for transcription of ribosomal RNA (rRNA) genes. Binds specifically to the boxA antiterminator sequence of the ribosomal RNA (rrn) operons. The chain is Transcription antitermination protein NusB from Limosilactobacillus reuteri (strain DSM 20016) (Lactobacillus reuteri).